The following is a 406-amino-acid chain: Phosphopentomutase (406 aa).

Mn(2+) contacts are provided by Asp-10, Asp-305, His-310, Asp-346, His-347, and His-358.

Belongs to the phosphopentomutase family. It depends on Mn(2+) as a cofactor.

Its subcellular location is the cytoplasm. It catalyses the reaction 2-deoxy-alpha-D-ribose 1-phosphate = 2-deoxy-D-ribose 5-phosphate. The enzyme catalyses alpha-D-ribose 1-phosphate = D-ribose 5-phosphate. It functions in the pathway carbohydrate degradation; 2-deoxy-D-ribose 1-phosphate degradation; D-glyceraldehyde 3-phosphate and acetaldehyde from 2-deoxy-alpha-D-ribose 1-phosphate: step 1/2. Its function is as follows. Isomerase that catalyzes the conversion of deoxy-ribose 1-phosphate (dRib-1-P) and ribose 1-phosphate (Rib-1-P) to deoxy-ribose 5-phosphate (dRib-5-P) and ribose 5-phosphate (Rib-5-P), respectively. This is Phosphopentomutase from Aliivibrio salmonicida (strain LFI1238) (Vibrio salmonicida (strain LFI1238)).